The following is a 287-amino-acid chain: Protease HtpX (287 aa).

Helical transmembrane passes span 4 to 24 and 33 to 53; these read IFLL…VMSI and GGLL…SLAI. Histidine 139 contacts Zn(2+). The active site involves glutamate 140. Histidine 143 contributes to the Zn(2+) binding site. The next 2 helical transmembrane spans lie at 154–174 and 195–215; these read LIQG…AGII and AVVF…VAYF. Zn(2+) is bound at residue glutamate 220.

Belongs to the peptidase M48B family. Zn(2+) is required as a cofactor.

The protein localises to the cell inner membrane. This is Protease HtpX from Shewanella baltica (strain OS223).